Reading from the N-terminus, the 227-residue chain is NAD(P)H-hydrate epimerase (227 aa).

The region spanning S12–E221 is the YjeF N-terminal domain. Position 59–63 (N59–D63) interacts with (6S)-NADPHX. 2 residues coordinate K(+): N60 and D131. Residues G135–E141 and D164 each bind (6S)-NADPHX. T167 provides a ligand contact to K(+).

It belongs to the NnrE/AIBP family. K(+) serves as cofactor.

It catalyses the reaction (6R)-NADHX = (6S)-NADHX. It carries out the reaction (6R)-NADPHX = (6S)-NADPHX. Catalyzes the epimerization of the S- and R-forms of NAD(P)HX, a damaged form of NAD(P)H that is a result of enzymatic or heat-dependent hydration. This is a prerequisite for the S-specific NAD(P)H-hydrate dehydratase to allow the repair of both epimers of NAD(P)HX. This is NAD(P)H-hydrate epimerase from Pirellula staleyi (strain ATCC 27377 / DSM 6068 / ICPB 4128) (Pirella staleyi).